Here is a 351-residue protein sequence, read N- to C-terminus: Ribonucleoside-diphosphate reductase subunit M2 B (351 aa).

The disordered stretch occupies residues 1-31 (MGDPERPEAAGLDQDERSSSDTNENEIKSNE). Fe cation is bound by residues Asp100, Glu131, and His134. Tyr138 is an active-site residue. Fe cation is bound by residues Glu194, Glu228, and His231.

Belongs to the ribonucleoside diphosphate reductase small chain family. In terms of assembly, heterotetramer with large (RRM1) subunit. Interacts with p53/TP53. Interacts with RRM1 in response to DNA damage. Fe cation serves as cofactor.

The protein resides in the cytoplasm. It is found in the nucleus. The catalysed reaction is a 2'-deoxyribonucleoside 5'-diphosphate + [thioredoxin]-disulfide + H2O = a ribonucleoside 5'-diphosphate + [thioredoxin]-dithiol. In terms of biological role, plays a pivotal role in cell survival by repairing damaged DNA in a p53/TP53-dependent manner. Supplies deoxyribonucleotides for DNA repair in cells arrested at G1 or G2. Contains an iron-tyrosyl free radical center required for catalysis. Forms an active ribonucleotide reductase (RNR) complex with RRM1 which is expressed both in resting and proliferating cells in response to DNA damage. The chain is Ribonucleoside-diphosphate reductase subunit M2 B (RRM2B) from Pongo abelii (Sumatran orangutan).